The sequence spans 405 residues: Syndecan-3 (405 aa).

Residues 1–22 form the signal peptide; that stretch reads MPAELRRLAVLLLLLSARAALA. The Extracellular segment spans residues 23–347; the sequence is QPWRNENYER…PQKNILERKE (325 aa). A disordered region spans residues 31-59; sequence ERPVDLEGSGDDDPFGDDELDDIYSGSGS. The segment covering 38–52 has biased composition (acidic residues); it reads GSGDDDPFGDDELDD. O-linked (Xyl...) (glycosaminoglycan) serine glycans are attached at residues serine 39, serine 55, serine 57, serine 59, and serine 66. 2 disordered regions span residues 134–159 and 191–301; these read TTTASTTASDSPSTTSTTTTTAATTT and TRAT…ELGN. Low complexity predominate over residues 191–201; sequence TRATTLETPTT. Polar residues predominate over residues 202–237; it reads SIPETSVLTEVTTSRLVPSSTAKPRSLPKPSTSRTA. O-linked (Xyl...) (glycosaminoglycan) serine glycosylation is found at serine 280, serine 283, and serine 330. Residues 348–372 form a helical membrane-spanning segment; that stretch reads VLIAVIVGGVVGALFAAFLVMLLIY. Residues 373-405 are Cytoplasmic-facing; that stretch reads RMKKKDEGSYTLEEPKQANVTYQKPDKQEEFYA.

This sequence belongs to the syndecan proteoglycan family. Post-translationally, O-glycosylated within the Thr/Ser-rich region which could interact with lectin domains on other molecules. In terms of tissue distribution, proximal chondrogenic central core of embryonic limb buds where cartilage differentiation is being initiated.

The protein localises to the membrane. Functionally, cell surface proteoglycan that may bear both heparan sulfate and chondroitin sulfate. The multiple functional domains provide potential sites for mediating the adhesive cell-matrix interactions and cytoskeletal reorganization involved in limb chondrogenesis. Interaction with other matrix ligands as well as phosphorylation and shedding of the ectodomain might be involved in cell shape changes that occur during chondrogenesis. Furthermore, shedding of the ectodomain might break the adhesive interactions that promoted condensation, thus facilitating the deposition of cartilage matrix molecules. In Gallus gallus (Chicken), this protein is Syndecan-3 (SDC3).